Here is a 352-residue protein sequence, read N- to C-terminus: Strictosidine synthase (352 aa).

The N-terminal stretch at 1-31 (MANFSESKSMMAVFFMFFLLLLSSSSSSSSS) is a signal peptide. N-linked (GlcNAc...) asparagine glycosylation is found at asparagine 95 and asparagine 187.

Belongs to the strictosidine synthase family. In terms of assembly, monomer.

The protein localises to the vacuole. It catalyses the reaction 3alpha(S)-strictosidine + H2O = secologanin + tryptamine. The protein operates within alkaloid biosynthesis; 3alpha(S)-strictosidine biosynthesis; 3alpha(S)-strictosidine from secologanin and tryptamine: step 1/1. Catalyzes the stereospecific condensation of tryptamine with secologanin to form strictosidine, the key intermediate of indole alkaloid biosynthesis. This chain is Strictosidine synthase (STR1), found in Catharanthus roseus (Madagascar periwinkle).